Reading from the N-terminus, the 554-residue chain is Propanediol dehydratase large subunit (554 aa).

It belongs to the diol/glycerol dehydratase large subunit family. The propanediol dehydratase enzyme is a heterotrimeric complex composed of a large (PduC), a medium (PduD) and a small (PduE) subunit. Adenosylcob(III)alamin is required as a cofactor.

The protein resides in the bacterial microcompartment. The enzyme catalyses propane-1,2-diol = propanal + H2O. Its pathway is polyol metabolism; 1,2-propanediol degradation. With respect to regulation, inhibited by glycerol. Its function is as follows. Part of the PduCDE complex that catalyzes the dehydration of 1,2-propanediol (1,2-PD) to propionaldehyde. Required for S.typhimurium growth on 1,2-PD as the sole carbon and energy source. This subunit is directly targeted to the BMC. The 1,2-PD-specific bacterial microcompartment (BMC) concentrates low levels of 1,2-PD catabolic enzymes, concentrates volatile reaction intermediates thus enhancing pathway flux and keeps the level of toxic, mutagenic propionaldehyde low. This is Propanediol dehydratase large subunit from Salmonella typhimurium (strain LT2 / SGSC1412 / ATCC 700720).